A 403-amino-acid chain; its full sequence is Tryptophan synthase beta chain 1 (403 aa).

An N6-(pyridoxal phosphate)lysine modification is found at Lys-93.

This sequence belongs to the TrpB family. Tetramer of two alpha and two beta chains. Pyridoxal 5'-phosphate is required as a cofactor.

The enzyme catalyses (1S,2R)-1-C-(indol-3-yl)glycerol 3-phosphate + L-serine = D-glyceraldehyde 3-phosphate + L-tryptophan + H2O. Its pathway is amino-acid biosynthesis; L-tryptophan biosynthesis; L-tryptophan from chorismate: step 5/5. The beta subunit is responsible for the synthesis of L-tryptophan from indole and L-serine. The polypeptide is Tryptophan synthase beta chain 1 (trpB1) (Methanosarcina acetivorans (strain ATCC 35395 / DSM 2834 / JCM 12185 / C2A)).